Here is a 61-residue protein sequence, read N- to C-terminus: Large ribosomal subunit protein uL30 (61 aa).

The protein belongs to the universal ribosomal protein uL30 family. In terms of assembly, part of the 50S ribosomal subunit.

This is Large ribosomal subunit protein uL30 from Chlorobaculum parvum (strain DSM 263 / NCIMB 8327) (Chlorobium vibrioforme subsp. thiosulfatophilum).